The following is a 504-amino-acid chain: Lysine--tRNA ligase (504 aa).

2 residues coordinate Mg(2+): Glu-411 and Glu-418.

The protein belongs to the class-II aminoacyl-tRNA synthetase family. Homodimer. Mg(2+) is required as a cofactor.

It is found in the cytoplasm. The enzyme catalyses tRNA(Lys) + L-lysine + ATP = L-lysyl-tRNA(Lys) + AMP + diphosphate. This Clostridium botulinum (strain Okra / Type B1) protein is Lysine--tRNA ligase.